We begin with the raw amino-acid sequence, 205 residues long: Probable thymidylate kinase (205 aa).

Residue 7–14 participates in ATP binding; it reads GIDGAGKS.

The protein belongs to the thymidylate kinase family.

The catalysed reaction is dTMP + ATP = dTDP + ADP. The sequence is that of Probable thymidylate kinase from Thermococcus onnurineus (strain NA1).